Reading from the N-terminus, the 138-residue chain is Large ribosomal subunit protein uL16c (138 aa).

The segment at 1-21 (MLSPQKTKFRKQHRGRMKGVS) is disordered. Basic residues predominate over residues 7 to 21 (TKFRKQHRGRMKGVS).

This sequence belongs to the universal ribosomal protein uL16 family. Part of the 50S ribosomal subunit.

It localises to the plastid. The protein resides in the chloroplast. The sequence is that of Large ribosomal subunit protein uL16c from Cycas taitungensis (Prince sago).